Consider the following 283-residue polypeptide: 4-diphosphocytidyl-2-C-methyl-D-erythritol kinase (283 aa).

The active site involves lysine 11. 94-104 contacts ATP; it reads PVAAGLAGGSA. Residue aspartate 136 is part of the active site.

The protein belongs to the GHMP kinase family. IspE subfamily.

The enzyme catalyses 4-CDP-2-C-methyl-D-erythritol + ATP = 4-CDP-2-C-methyl-D-erythritol 2-phosphate + ADP + H(+). It participates in isoprenoid biosynthesis; isopentenyl diphosphate biosynthesis via DXP pathway; isopentenyl diphosphate from 1-deoxy-D-xylulose 5-phosphate: step 3/6. Catalyzes the phosphorylation of the position 2 hydroxy group of 4-diphosphocytidyl-2C-methyl-D-erythritol. The chain is 4-diphosphocytidyl-2-C-methyl-D-erythritol kinase from Acetivibrio thermocellus (strain ATCC 27405 / DSM 1237 / JCM 9322 / NBRC 103400 / NCIMB 10682 / NRRL B-4536 / VPI 7372) (Clostridium thermocellum).